The following is a 391-amino-acid chain: Phosphoglycerate kinase (391 aa).

Residues 21–23 (DLN), Arg-36, 59–62 (HLGR), Arg-113, and Arg-146 each bind substrate. ATP is bound by residues Lys-197, Glu-319, and 345 to 348 (GGDT).

It belongs to the phosphoglycerate kinase family. Monomer.

The protein resides in the cytoplasm. The enzyme catalyses (2R)-3-phosphoglycerate + ATP = (2R)-3-phospho-glyceroyl phosphate + ADP. Its pathway is carbohydrate degradation; glycolysis; pyruvate from D-glyceraldehyde 3-phosphate: step 2/5. In Xanthomonas oryzae pv. oryzae (strain PXO99A), this protein is Phosphoglycerate kinase.